An 84-amino-acid polypeptide reads, in one-letter code: Small ribosomal subunit protein bS18 (84 aa).

Belongs to the bacterial ribosomal protein bS18 family. In terms of assembly, part of the 30S ribosomal subunit. Forms a tight heterodimer with protein bS6.

Binds as a heterodimer with protein bS6 to the central domain of the 16S rRNA, where it helps stabilize the platform of the 30S subunit. The chain is Small ribosomal subunit protein bS18 from Mycoplasma mobile (strain ATCC 43663 / 163K / NCTC 11711) (Mesomycoplasma mobile).